Reading from the N-terminus, the 853-residue chain is DNA mismatch repair protein MutS (853 aa).

614–621 (GPNMGGKS) contacts ATP.

Belongs to the DNA mismatch repair MutS family.

Functionally, this protein is involved in the repair of mismatches in DNA. It is possible that it carries out the mismatch recognition step. This protein has a weak ATPase activity. In Escherichia coli (strain SE11), this protein is DNA mismatch repair protein MutS.